The sequence spans 122 residues: Ribosome-binding factor A (122 aa).

It belongs to the RbfA family. As to quaternary structure, monomer. Binds 30S ribosomal subunits, but not 50S ribosomal subunits or 70S ribosomes.

It localises to the cytoplasm. Functionally, one of several proteins that assist in the late maturation steps of the functional core of the 30S ribosomal subunit. Associates with free 30S ribosomal subunits (but not with 30S subunits that are part of 70S ribosomes or polysomes). Required for efficient processing of 16S rRNA. May interact with the 5'-terminal helix region of 16S rRNA. This is Ribosome-binding factor A from Syntrophomonas wolfei subsp. wolfei (strain DSM 2245B / Goettingen).